Here is a 66-residue protein sequence, read N- to C-terminus: Large ribosomal subunit protein bL33c (66 aa).

As to quaternary structure, component of the chloroplast large ribosomal subunit (LSU). Mature 70S chloroplast ribosomes of higher plants consist of a small (30S) and a large (50S) subunit. The 30S small subunit contains 1 molecule of ribosomal RNA (16S rRNA) and 24 different proteins. The 50S large subunit contains 3 rRNA molecules (23S, 5S and 4.5S rRNA) and 33 different proteins.

It is found in the plastid. The protein resides in the chloroplast. In terms of biological role, component of the chloroplast ribosome (chloro-ribosome), a dedicated translation machinery responsible for the synthesis of chloroplast genome-encoded proteins, including proteins of the transcription and translation machinery and components of the photosynthetic apparatus. In Spinacia oleracea (Spinach), this protein is Large ribosomal subunit protein bL33c (rpl33).